Consider the following 230-residue polypeptide: Small ribosomal subunit protein uS2 (230 aa).

It belongs to the universal ribosomal protein uS2 family.

The sequence is that of Small ribosomal subunit protein uS2 from Prochlorococcus marinus (strain NATL2A).